The sequence spans 341 residues: N-acetyl-gamma-glutamyl-phosphate reductase (341 aa).

Cysteine 145 is an active-site residue.

Belongs to the NAGSA dehydrogenase family. Type 1 subfamily.

The protein resides in the cytoplasm. It carries out the reaction N-acetyl-L-glutamate 5-semialdehyde + phosphate + NADP(+) = N-acetyl-L-glutamyl 5-phosphate + NADPH + H(+). It functions in the pathway amino-acid biosynthesis; L-arginine biosynthesis; N(2)-acetyl-L-ornithine from L-glutamate: step 3/4. In terms of biological role, catalyzes the NADPH-dependent reduction of N-acetyl-5-glutamyl phosphate to yield N-acetyl-L-glutamate 5-semialdehyde. In Methanothrix thermoacetophila (strain DSM 6194 / JCM 14653 / NBRC 101360 / PT) (Methanosaeta thermophila), this protein is N-acetyl-gamma-glutamyl-phosphate reductase.